Reading from the N-terminus, the 230-residue chain is 7-cyano-7-deazaguanine synthase (230 aa).

ATP is bound at residue 8 to 18; it reads LSGGMDSAVVT. Positions 186, 196, 199, and 202 each coordinate Zn(2+).

This sequence belongs to the QueC family. It depends on Zn(2+) as a cofactor.

The enzyme catalyses 7-carboxy-7-deazaguanine + NH4(+) + ATP = 7-cyano-7-deazaguanine + ADP + phosphate + H2O + H(+). The protein operates within purine metabolism; 7-cyano-7-deazaguanine biosynthesis. Functionally, catalyzes the ATP-dependent conversion of 7-carboxy-7-deazaguanine (CDG) to 7-cyano-7-deazaguanine (preQ(0)). This is 7-cyano-7-deazaguanine synthase from Xylella fastidiosa (strain M12).